A 393-amino-acid chain; its full sequence is Phospholipid-transporting ATPase accessory subunit CRF1 (393 aa).

The Cytoplasmic portion of the chain corresponds to 1–46 (MGLILRWKEKKQLSSKQNAQKSRKPANTSFRQQRLKAWQPILSPQS). The chain crosses the membrane as a helical span at residues 47–67 (VLPLLILMACVFAPIGIGLVV). Topologically, residues 68–334 (STISVQRLVV…NSIIGAGNEA (267 aa)) are lumenal. The tract at residues 70 to 332 (ISVQRLVVNY…TTNSIIGAGN (263 aa)) is confers specificity for binding DNF3. N-linked (GlcNAc...) asparagine glycosylation is found at Asn78, Asn123, Asn187, Asn202, Asn213, Asn240, and Asn291. Intrachain disulfides connect Cys82–Cys126 and Cys179–Cys193. The helical transmembrane segment at 335 to 355 (LGIVYLIVAGIATLFAILFLI) threads the bilayer. At 356–393 (KVIFKPRPMHDHSYLNFENSDTPFDESSVVSIPLREIL) the chain is on the cytoplasmic side.

The protein belongs to the CDC50/LEM3 family. In terms of assembly, component of a flippase complex consisting of DNF3 and YNR048W/CRF1. Interacts with DNF3; the interaction is direct and required for proper expression and endoplasmic reticulum (ER) export of either partner.

The protein localises to the golgi apparatus. The protein resides in the trans-Golgi network membrane. In terms of biological role, accessory component of a P4-ATPase flippase complex which catalyzes the hydrolysis of ATP coupled to the transport of phosphatidylcholine and small amounts of phosphatidylethanolamine from the lumen to the cytosolic leaflet of the trans-Golgi network and ensures the maintenance of asymmetric distribution of phospholipids. May be involved in transport from early endosomes to the trans-Golgi network (TGN). The protein is Phospholipid-transporting ATPase accessory subunit CRF1 of Saccharomyces cerevisiae (strain ATCC 204508 / S288c) (Baker's yeast).